The following is an 83-amino-acid chain: RNA-binding protein Hfq (83 aa).

Residues 9-68 (DPYLNALRKERIPVSIFLVNGIKLQGQIESFDQFVILLKNTVSQMVYKHAISTVVPARNV) enclose the Sm domain.

Belongs to the Hfq family. Homohexamer.

In terms of biological role, RNA chaperone that binds small regulatory RNA (sRNAs) and mRNAs to facilitate mRNA translational regulation in response to envelope stress, environmental stress and changes in metabolite concentrations. Also binds with high specificity to tRNAs. This is RNA-binding protein Hfq from Hahella chejuensis (strain KCTC 2396).